A 517-amino-acid polypeptide reads, in one-letter code: Cytochrome P450 monooxygenase 124 (517 aa).

Residues 3–23 form a helical membrane-spanning segment; that stretch reads SLLVLFVSLLALGALKKHLDF. Cys-453 contributes to the heme binding site.

This sequence belongs to the cytochrome P450 family. The cofactor is heme.

It is found in the membrane. Its pathway is secondary metabolite biosynthesis. Cytochrome P450 monooxygenase that is able to use trans-stilbene as a substrate for oxidation. This is Cytochrome P450 monooxygenase 124 from Postia placenta (strain ATCC 44394 / Madison 698-R) (Brown rot fungus).